The chain runs to 473 residues: tRNA modification GTPase MnmE (473 aa).

Positions 30, 95, and 134 each coordinate (6S)-5-formyl-5,6,7,8-tetrahydrofolate. The TrmE-type G domain occupies 230-394 (GVAAVIAGRP…LKSTMAGMVE (165 aa)). Residues 240–245 (NAGKST), 259–265 (SHMPGTT), and 284–287 (DTAG) each bind GTP. Ser-244 and Thr-265 together coordinate Mg(2+). (6S)-5-formyl-5,6,7,8-tetrahydrofolate is bound at residue Lys-473.

Belongs to the TRAFAC class TrmE-Era-EngA-EngB-Septin-like GTPase superfamily. TrmE GTPase family. As to quaternary structure, homodimer. Heterotetramer of two MnmE and two MnmG subunits. It depends on K(+) as a cofactor.

It is found in the cytoplasm. Its function is as follows. Exhibits a very high intrinsic GTPase hydrolysis rate. Involved in the addition of a carboxymethylaminomethyl (cmnm) group at the wobble position (U34) of certain tRNAs, forming tRNA-cmnm(5)s(2)U34. The sequence is that of tRNA modification GTPase MnmE from Chlorobium phaeovibrioides (strain DSM 265 / 1930) (Prosthecochloris vibrioformis (strain DSM 265)).